The primary structure comprises 704 residues: Structure-specific endonuclease subunit SLX1 homolog (704 aa).

The GIY-YIG domain maps to 4–90 (RFHCVYLLTS…TASARLRHTI (87 aa)). Disordered regions lie at residues 157 to 180 (ESPRVGTQQHSQRSSSLQGQADGV), 290 to 323 (ASFASDSDDEDTRRLAPYCPSAGSSTPSPQRVRT), and 354 to 378 (GAALRSFSSPPPPRESSPRSASRPP). Polar residues-rich tracts occupy residues 161–175 (VGTQQHSQRSSSLQG) and 311–320 (AGSSTPSPQR). The SLX1-type zinc finger occupies 446 to 526 (CSLCALPLQP…PSQPCPCPLC (81 aa)). Disordered stretches follow at residues 601-629 (VPGAASTVPAPTMHAGPARRDAPRVSSPI) and 650-671 (ASLAALSPTSASPISRHNGHSN). The segment covering 650–662 (ASLAALSPTSASP) has biased composition (low complexity).

This sequence belongs to the SLX1 family. In terms of assembly, forms a heterodimer with a member of the SLX4 family. Requires a divalent metal cation as cofactor.

Its subcellular location is the nucleus. Functionally, catalytic subunit of a heterodimeric structure-specific endonuclease that resolves DNA secondary structures generated during DNA repair and recombination. Has endonuclease activity towards branched DNA substrates, introducing single-strand cuts in duplex DNA close to junctions with ss-DNA. The polypeptide is Structure-specific endonuclease subunit SLX1 homolog (Leishmania major).